Consider the following 472-residue polypeptide: Adenosylhomocysteinase (472 aa).

Substrate contacts are provided by Thr61, Asp136, and Glu196. An NAD(+)-binding site is contributed by 197–199 (TTT). Substrate is bound by residues Lys226 and Asp230. NAD(+) contacts are provided by residues Asn231, 260–265 (GYGDVG), Glu283, Asn318, 339–341 (IGH), and Asn384.

The protein belongs to the adenosylhomocysteinase family. NAD(+) is required as a cofactor.

The protein resides in the cytoplasm. The catalysed reaction is S-adenosyl-L-homocysteine + H2O = L-homocysteine + adenosine. The protein operates within amino-acid biosynthesis; L-homocysteine biosynthesis; L-homocysteine from S-adenosyl-L-homocysteine: step 1/1. Functionally, may play a key role in the regulation of the intracellular concentration of adenosylhomocysteine. This chain is Adenosylhomocysteinase, found in Cupriavidus necator (strain ATCC 17699 / DSM 428 / KCTC 22496 / NCIMB 10442 / H16 / Stanier 337) (Ralstonia eutropha).